The primary structure comprises 91 residues: Protein xpaR7 (91 aa).

The polypeptide is Protein xpaR7 (xpaR7) (Bacillus licheniformis).